The chain runs to 276 residues: 4-hydroxy-3-methylbut-2-enyl diphosphate reductase (276 aa).

Residue C12 coordinates [4Fe-4S] cluster. Positions 36 and 71 each coordinate (2E)-4-hydroxy-3-methylbut-2-enyl diphosphate. Dimethylallyl diphosphate-binding residues include H36 and H71. Residues H36 and H71 each contribute to the isopentenyl diphosphate site. C93 contributes to the [4Fe-4S] cluster binding site. A (2E)-4-hydroxy-3-methylbut-2-enyl diphosphate-binding site is contributed by H121. Residue H121 coordinates dimethylallyl diphosphate. Residue H121 coordinates isopentenyl diphosphate. Residue E123 is the Proton donor of the active site. Residue T160 coordinates (2E)-4-hydroxy-3-methylbut-2-enyl diphosphate. Residue C188 participates in [4Fe-4S] cluster binding. Positions 216, 217, 218, and 259 each coordinate (2E)-4-hydroxy-3-methylbut-2-enyl diphosphate. Dimethylallyl diphosphate contacts are provided by S216, S217, N218, and S259. Isopentenyl diphosphate contacts are provided by S216, S217, N218, and S259.

Belongs to the IspH family. The cofactor is [4Fe-4S] cluster.

It carries out the reaction isopentenyl diphosphate + 2 oxidized [2Fe-2S]-[ferredoxin] + H2O = (2E)-4-hydroxy-3-methylbut-2-enyl diphosphate + 2 reduced [2Fe-2S]-[ferredoxin] + 2 H(+). The catalysed reaction is dimethylallyl diphosphate + 2 oxidized [2Fe-2S]-[ferredoxin] + H2O = (2E)-4-hydroxy-3-methylbut-2-enyl diphosphate + 2 reduced [2Fe-2S]-[ferredoxin] + 2 H(+). It functions in the pathway isoprenoid biosynthesis; dimethylallyl diphosphate biosynthesis; dimethylallyl diphosphate from (2E)-4-hydroxy-3-methylbutenyl diphosphate: step 1/1. The protein operates within isoprenoid biosynthesis; isopentenyl diphosphate biosynthesis via DXP pathway; isopentenyl diphosphate from 1-deoxy-D-xylulose 5-phosphate: step 6/6. Catalyzes the conversion of 1-hydroxy-2-methyl-2-(E)-butenyl 4-diphosphate (HMBPP) into a mixture of isopentenyl diphosphate (IPP) and dimethylallyl diphosphate (DMAPP). Acts in the terminal step of the DOXP/MEP pathway for isoprenoid precursor biosynthesis. The polypeptide is 4-hydroxy-3-methylbut-2-enyl diphosphate reductase (Nautilia profundicola (strain ATCC BAA-1463 / DSM 18972 / AmH)).